The following is a 309-amino-acid chain: MFQVQCLESAQKAATENVAKFCIEPLSKGQGITIGNALRRTLLSNIPGTAIVGTRISGVDHEFSVIPGVKEDALEILLNLKQLVFKGNLNEPIITRLNIQGPCIVTAGDIDIPTDLELIDPQQYIATITDFSHLEMEFILEQGESYVLSEKTASNNPRGFLAVDAVFTPIKKVNFFVETSSSKERLEKERLIIEIETNGSILPLEALNLAAERLSSLFKLVNSADLTAEFPTEVENIVQVSQTDVTGVLIEELELSVRAYNCLKRAQIHTLGELLKYSKENLLEFKNFGQKSANEVCENLHERFNLTLN.

Positions 1-225 (MFQVQCLESA…SLFKLVNSAD (225 aa)) are alpha N-terminal domain (alpha-NTD). The segment at 237-309 (IVQVSQTDVT…LHERFNLTLN (73 aa)) is alpha C-terminal domain (alpha-CTD).

It belongs to the RNA polymerase alpha chain family. In plastids the minimal PEP RNA polymerase catalytic core is composed of four subunits: alpha, beta, beta', and beta''. When a (nuclear-encoded) sigma factor is associated with the core the holoenzyme is formed, which can initiate transcription.

The protein localises to the plastid. The protein resides in the chloroplast. It carries out the reaction RNA(n) + a ribonucleoside 5'-triphosphate = RNA(n+1) + diphosphate. Functionally, DNA-dependent RNA polymerase catalyzes the transcription of DNA into RNA using the four ribonucleoside triphosphates as substrates. The protein is DNA-directed RNA polymerase subunit alpha of Emiliania huxleyi (Coccolithophore).